Consider the following 450-residue polypeptide: C4-dicarboxylate transport protein (450 aa).

The next 8 helical transmembrane spans lie at 25–45, 56–76, 90–110, 162–182, 200–220, 234–254, 319–339, and 367–387; these read VVFA…YGAA, LIKM…IASM, MAYF…VANV, ILQV…VGDA, LVNI…AFTI, LVLT…GAVA, IYMT…LTLG, and AATL…ILGV.

This sequence belongs to the dicarboxylate/amino acid:cation symporter (DAACS) (TC 2.A.23) family.

The protein resides in the cell inner membrane. Responsible for the transport of dicarboxylates such as succinate, fumarate, and malate from the periplasm across the membrane. The sequence is that of C4-dicarboxylate transport protein from Acidovorax sp. (strain JS42).